The chain runs to 200 residues: Large ribosomal subunit protein uL4 (200 aa).

The disordered stretch occupies residues 42 to 65 (TRAQKTRSEVSGGGAKPWRQKGTG).

It belongs to the universal ribosomal protein uL4 family. Part of the 50S ribosomal subunit.

In terms of biological role, one of the primary rRNA binding proteins, this protein initially binds near the 5'-end of the 23S rRNA. It is important during the early stages of 50S assembly. It makes multiple contacts with different domains of the 23S rRNA in the assembled 50S subunit and ribosome. Its function is as follows. Forms part of the polypeptide exit tunnel. The protein is Large ribosomal subunit protein uL4 of Vibrio cholerae serotype O1 (strain ATCC 39541 / Classical Ogawa 395 / O395).